A 396-amino-acid polypeptide reads, in one-letter code: Phosphoglycerate kinase (396 aa).

Residues 21-23 (DFN), R36, 59-62 (HLGR), R119, and R156 each bind substrate. ATP contacts are provided by residues K207, E325, and 352-355 (GGDS).

Belongs to the phosphoglycerate kinase family. As to quaternary structure, monomer.

The protein localises to the cytoplasm. The enzyme catalyses (2R)-3-phosphoglycerate + ATP = (2R)-3-phospho-glyceroyl phosphate + ADP. The protein operates within carbohydrate degradation; glycolysis; pyruvate from D-glyceraldehyde 3-phosphate: step 2/5. The protein is Phosphoglycerate kinase of Lacticaseibacillus casei (strain BL23) (Lactobacillus casei).